Here is a 161-residue protein sequence, read N- to C-terminus: Regulator of ribonuclease activity A (161 aa).

It belongs to the RraA family. In terms of assembly, homotrimer. Binds to both RNA-binding sites in the C-terminal region of Rne and to RhlB.

The protein localises to the cytoplasm. Its function is as follows. Globally modulates RNA abundance by binding to RNase E (Rne) and regulating its endonucleolytic activity. Can modulate Rne action in a substrate-dependent manner by altering the composition of the degradosome. Modulates RNA-binding and helicase activities of the degradosome. The polypeptide is Regulator of ribonuclease activity A (Pseudoalteromonas atlantica (strain T6c / ATCC BAA-1087)).